A 728-amino-acid polypeptide reads, in one-letter code: 1,4-alpha-glucan branching enzyme GlgB (728 aa).

Catalysis depends on aspartate 405, which acts as the Nucleophile. Residue glutamate 458 is the Proton donor of the active site.

This sequence belongs to the glycosyl hydrolase 13 family. GlgB subfamily. In terms of assembly, monomer.

It catalyses the reaction Transfers a segment of a (1-&gt;4)-alpha-D-glucan chain to a primary hydroxy group in a similar glucan chain.. Its pathway is glycan biosynthesis; glycogen biosynthesis. Functionally, catalyzes the formation of the alpha-1,6-glucosidic linkages in glycogen by scission of a 1,4-alpha-linked oligosaccharide from growing alpha-1,4-glucan chains and the subsequent attachment of the oligosaccharide to the alpha-1,6 position. This Salmonella paratyphi A (strain ATCC 9150 / SARB42) protein is 1,4-alpha-glucan branching enzyme GlgB.